The sequence spans 280 residues: Myelin proteolipid protein B (280 aa).

The Cytoplasmic segment spans residues 1–10; it reads MGWHDGCIRC. Residues Cys-7 and Cys-10 are each lipidated (S-palmitoyl cysteine). Residues 11-36 form a helical membrane-spanning segment; sequence MVGVPFASVIATVLCFAGVALFCGCG. Over 37–59 the chain is Extracellular; the sequence is HEALSGTEKLIETYFSKNYQEYE. A helical membrane pass occupies residues 60–88; the sequence is YLIHVINAFQYVIYGIAIFFFLYGILLLA. The Cytoplasmic portion of the chain corresponds to 89–152; the sequence is EGFYTTTAIK…LGKWLGHPDK (64 aa). 2 S-palmitoyl cysteine lipidation sites follow: Cys-140 and Cys-142. The chain crosses the membrane as a helical span at residues 153–179; it reads FVGVTYVITILWILIFACSAVPVYIYF. The Extracellular portion of the chain corresponds to 180 to 239; the sequence is NTWVTCQSIAFPGKTTTSVSTLCLDARMYGVLPWNAFPGKVCGTSLLAICKTSEFQMTFH. Disulfide bonds link Cys-185–Cys-229 and Cys-202–Cys-221. The helical transmembrane segment at 240–269 threads the bilayer; it reads LFIAAFVGAAATLVALLTYMVGASFNYAVL. Topologically, residues 270–280 are cytoplasmic; the sequence is RVTGRSDRSKF.

Belongs to the myelin proteolipid protein family.

It localises to the cell membrane. Functionally, this is the major myelin protein from the central nervous system. It plays an important role in the formation or maintenance of the multilamellar structure of myelin. This Xenopus laevis (African clawed frog) protein is Myelin proteolipid protein B (plp1-b).